A 92-amino-acid chain; its full sequence is Small ribosomal subunit protein uS19 (92 aa).

This sequence belongs to the universal ribosomal protein uS19 family.

In terms of biological role, protein S19 forms a complex with S13 that binds strongly to the 16S ribosomal RNA. This Neisseria meningitidis serogroup C (strain 053442) protein is Small ribosomal subunit protein uS19.